Reading from the N-terminus, the 152-residue chain is Gamma-glutamylaminecyclotransferase C (152 aa).

9–12 (YGSL) is a binding site for substrate. Catalysis depends on Glu84, which acts as the Proton acceptor.

Belongs to the gamma-glutamylcyclotransferase family.

The enzyme catalyses epsilon-(gamma-L-glutamyl)-L-lysine = 5-oxo-L-proline + L-lysine. Functionally, may contribute to degradation of proteins cross-linked by transglutaminases by degrading the cross-link between a lysine and a glutamic acid residue. Catalyzes the formation of 5-oxo-L-proline from L-gamma-glutamyl-L-epsilon-lysine. In Danio rerio (Zebrafish), this protein is Gamma-glutamylaminecyclotransferase C (ggact.3).